The sequence spans 123 residues: RxLR effector protein Avh262 (123 aa).

An N-terminal signal peptide occupies residues 1 to 18 (MLPVAVVLVVFAVAVTSA). The disordered stretch occupies residues 24 to 46 (VNPLPRRRRLKGTEEKGHHTNVN). A RxLR-dEER motif is present at residues 30 to 50 (RRRLKGTEEKGHHTNVNDEER). The segment covering 34-46 (KGTEEKGHHTNVN) has biased composition (basic and acidic residues). The segment at 60-82 (LISKLKVKINAKLLAGDSAKPAT) is biP-binding.

Belongs to the RxLR effector family. Interacts with host plant ER-luminal binding immunoglobulin proteins (BiPs) such as soybean BiP1, BiP2, BiP3 and BiP4.

Its subcellular location is the secreted. It localises to the host endoplasmic reticulum. Functionally, effector that suppresses plant defense responses during the early stages of pathogen infection. Suppresses cell death induced by effectors and PAMPs in plant hosts. Avh262 stabilizes endoplasmic reticulum (ER)-luminal binding immunoglobulin proteins (BiPs), which act as negative regulators of plant resistance to Phytophthora. By stabilizing BiPs, Avh262 suppresses ER stress-triggered cell death and facilitates Phytophthora infection. This chain is RxLR effector protein Avh262, found in Phytophthora sojae (Soybean stem and root rot agent).